The primary structure comprises 448 residues: Ribosomal protein uS12 methylthiotransferase RimO (448 aa).

Positions 7-119 (QSLHLISLGC…IDSMIAQRRS (113 aa)) constitute an MTTase N-terminal domain. Cysteine 16, cysteine 50, cysteine 82, cysteine 151, cysteine 155, and cysteine 158 together coordinate [4Fe-4S] cluster. The 230-residue stretch at 137-366 (IGSSFHAYIK…NKIIQSQYKA (230 aa)) folds into the Radical SAM core domain.

It belongs to the methylthiotransferase family. RimO subfamily. [4Fe-4S] cluster serves as cofactor.

The protein resides in the cytoplasm. It carries out the reaction L-aspartate(89)-[ribosomal protein uS12]-hydrogen + (sulfur carrier)-SH + AH2 + 2 S-adenosyl-L-methionine = 3-methylsulfanyl-L-aspartate(89)-[ribosomal protein uS12]-hydrogen + (sulfur carrier)-H + 5'-deoxyadenosine + L-methionine + A + S-adenosyl-L-homocysteine + 2 H(+). Functionally, catalyzes the methylthiolation of an aspartic acid residue of ribosomal protein uS12. This is Ribosomal protein uS12 methylthiotransferase RimO from Helicobacter hepaticus (strain ATCC 51449 / 3B1).